The following is a 226-amino-acid chain: Small ribosomal subunit protein uS5 (226 aa).

The tract at residues 1 to 71 (MEDIKHNKKP…RKNEKRTKSE (71 aa)) is disordered. Over residues 24–54 (ANPQANHANPNNRSASVNNNSVNNNKKNSSR) the composition is skewed to low complexity. The 64-residue stretch at 72–135 (FEEKIVKISR…KMAENNVQKI (64 aa)) folds into the S5 DRBM domain.

Belongs to the universal ribosomal protein uS5 family. Part of the 30S ribosomal subunit. Contacts proteins S4 and S8.

Functionally, with S4 and S12 plays an important role in translational accuracy. Located at the back of the 30S subunit body where it stabilizes the conformation of the head with respect to the body. This Mycoplasmoides gallisepticum (strain R(low / passage 15 / clone 2)) (Mycoplasma gallisepticum) protein is Small ribosomal subunit protein uS5.